The sequence spans 205 residues: MAQLYFYYSAMNAGKSTALLQSSYNYQERGMRTVVYTAEIDDRFGAGKVSSRIGLSSPAKLFNQNTSLFEEIRAESVRQTIHCVLVDESQFLTRQQVYQLSEVVDKLDIPVLCYGLRTDFRGELFVGSQYLLAWSDKLVELKTICFCGRKASMVLRLDQDGRPYNEGEQVVIGGNERYVSVCRKHYKDALEEGSLTAIQERHRHI.

ATP-binding positions include 9 to 16 and 87 to 90; these read SAMNAGKS and DESQ. Residue Glu-88 is the Proton acceptor of the active site. Zn(2+)-binding residues include Cys-145, Cys-147, Cys-182, and His-185.

This sequence belongs to the thymidine kinase family. As to quaternary structure, homotetramer.

It localises to the cytoplasm. It carries out the reaction thymidine + ATP = dTMP + ADP + H(+). The protein is Thymidine kinase of Salmonella choleraesuis (strain SC-B67).